A 253-amino-acid chain; its full sequence is Indole-3-glycerol phosphate synthase (253 aa).

This sequence belongs to the TrpC family.

The enzyme catalyses 1-(2-carboxyphenylamino)-1-deoxy-D-ribulose 5-phosphate + H(+) = (1S,2R)-1-C-(indol-3-yl)glycerol 3-phosphate + CO2 + H2O. It participates in amino-acid biosynthesis; L-tryptophan biosynthesis; L-tryptophan from chorismate: step 4/5. This chain is Indole-3-glycerol phosphate synthase, found in Exiguobacterium sp. (strain ATCC BAA-1283 / AT1b).